A 237-amino-acid chain; its full sequence is B3 domain-containing protein Os06g0194400 (237 aa).

Disordered regions lie at residues 1-23 and 38-82; these read MIEAESQMAEAASYEEQRRRQVE and SAAV…LPEK. The TF-B3 DNA-binding region spans 139–230; it reads FVKPMLQSHV…KFKVYIIRAS (92 aa).

It is found in the nucleus. In Oryza sativa subsp. japonica (Rice), this protein is B3 domain-containing protein Os06g0194400.